Reading from the N-terminus, the 324-residue chain is Delta-aminolevulinic acid dehydratase (324 aa).

Zn(2+) contacts are provided by Cys118, Cys120, and Cys128. Catalysis depends on Lys195, which acts as the Schiff-base intermediate with substrate. Residues Arg205 and Arg217 each contribute to the 5-aminolevulinate site. Mg(2+) is bound at residue Glu233. The Schiff-base intermediate with substrate role is filled by Lys248. 5-aminolevulinate is bound by residues Ser274 and Tyr313.

Belongs to the ALAD family. Homooctamer. Zn(2+) serves as cofactor.

It catalyses the reaction 2 5-aminolevulinate = porphobilinogen + 2 H2O + H(+). The protein operates within porphyrin-containing compound metabolism; protoporphyrin-IX biosynthesis; coproporphyrinogen-III from 5-aminolevulinate: step 1/4. Its function is as follows. Catalyzes an early step in the biosynthesis of tetrapyrroles. Binds two molecules of 5-aminolevulinate per subunit, each at a distinct site, and catalyzes their condensation to form porphobilinogen. This is Delta-aminolevulinic acid dehydratase (hemB) from Staphylococcus epidermidis (strain ATCC 12228 / FDA PCI 1200).